We begin with the raw amino-acid sequence, 76 residues long: Small ribosomal subunit protein uS17 (76 aa).

The protein belongs to the universal ribosomal protein uS17 family. As to quaternary structure, part of the 30S ribosomal subunit.

One of the primary rRNA binding proteins, it binds specifically to the 5'-end of 16S ribosomal RNA. The polypeptide is Small ribosomal subunit protein uS17 (Anaplasma phagocytophilum (strain HZ)).